The sequence spans 590 residues: Putative ferric-chelate reductase 1 (590 aa).

Residues 2–22 traverse the membrane as a helical segment; the sequence is NPLGLFLIYLYTCALTPVSGY. The Reelin domain maps to 12–179; the sequence is YTCALTPVSG…APKIPSSTIP (168 aa). The region spanning 217–330 is the DOMON domain; the sequence is ECFFLSFRKD…RSYFIFLADG (114 aa). The Cytochrome b561 domain occupies 334 to 533; the sequence is DGLLYRHHRQ…VFVDLLLEAH (200 aa). The helical transmembrane segment at 371–391 threads the bilayer; it reads LHGAMMFIAWMTTVSIGVIIA. Heme b is bound by residues His-372 and His-413. 2 helical membrane passes run 416-436 and 445-465; these read LMITTVFLTVVAFVLPFIYRG and HPHLGVTVMILTVLQPVLAVF. His-445 contacts heme b. A glycan (N-linked (GlcNAc...) asparagine) is linked at Asn-478. His-481 contributes to the heme b binding site. A run of 3 helical transmembrane segments spans residues 482 to 502, 517 to 537, and 567 to 587; these read WATGTAARIIAVAAMFLGMDL, IGFVLWHVFVDLLLEAHGFCL, and IVMTVYICGNLAFLITFLAAI.

This sequence belongs to the FRRS1 family. The cofactor is heme b.

Its subcellular location is the membrane. Functionally, putative ferric-chelate reductases reduce Fe(3+) to Fe(2+) before its transport from the endosome to the cytoplasm. This chain is Putative ferric-chelate reductase 1 (frrs1), found in Xenopus laevis (African clawed frog).